The following is a 128-amino-acid chain: Early 4 ORF1 protein (128 aa).

Topologically, residues 1–26 are cytoplasmic; that stretch reads MAAAVEALYVVLEREGAILPRQEGFS. Residues 27–47 form a helical membrane-spanning segment; sequence GVYVFFSPINFVIPPMGAVML. At 48-99 the chain is on the extracellular side; that stretch reads SLRLRVCIPPGYFGRFLALTDVNQPDVFTESYIMTPDMTEELSVVLFNHGDQ. Residues 100–120 traverse the membrane as a helical segment; sequence FFYGHAGMAVVRLMLIRVVFP. The Cytoplasmic segment spans residues 121–128; sequence VVRQASNV. Residues 125–128 carry the PBZ domain binding motif motif; it reads ASNV.

The protein belongs to the adenoviridae E4-ORF1 family. As to quaternary structure, may interact with host PDZ proteins through the PDZ domain binding motif (PBM), namely host DLG1, PATJ and TJP2.

It is found in the host membrane. Functionally, may modulate tight-junctions functions of infected cells through interactions with PDZ proteins. E4 ORF1 has ben show for Adenovirus 9 to interact with protein involved in tight junction regulation. May play a role in mTOR activation by activating PI3-kinase, thus overriding cellular checkpoint for translation. The sequence is that of Early 4 ORF1 protein from Human adenovirus C serotype 2 (HAdV-2).